Consider the following 80-residue polypeptide: UPF0125 protein PD_1376 (80 aa).

This sequence belongs to the UPF0125 (RnfH) family.

The chain is UPF0125 protein PD_1376 from Xylella fastidiosa (strain Temecula1 / ATCC 700964).